The primary structure comprises 489 residues: Rhamnulokinase (489 aa).

13–17 contributes to the ATP binding site; sequence ASSGR. A disulfide bridge connects residues Cys68 and Cys222. Substrate contacts are provided by residues Gly83 and 236 to 238; that span reads HDT. Residue Asp237 is the Proton acceptor of the active site. Thr259 is an ATP binding site. A substrate-binding site is contributed by Asn296. Gln304 serves as a coordination point for ATP. Cys353 and Cys370 form a disulfide bridge. Gly402 lines the ATP pocket. Cys413 and Cys417 are joined by a disulfide.

It belongs to the rhamnulokinase family. It depends on Mg(2+) as a cofactor.

The catalysed reaction is L-rhamnulose + ATP = L-rhamnulose 1-phosphate + ADP + H(+). The protein operates within carbohydrate degradation; L-rhamnose degradation; glycerone phosphate from L-rhamnose: step 2/3. In terms of biological role, involved in the catabolism of L-rhamnose (6-deoxy-L-mannose). Catalyzes the transfer of the gamma-phosphate group from ATP to the 1-hydroxyl group of L-rhamnulose to yield L-rhamnulose 1-phosphate. The sequence is that of Rhamnulokinase from Salmonella typhimurium (strain LT2 / SGSC1412 / ATCC 700720).